We begin with the raw amino-acid sequence, 213 residues long: MSSVSIVDYGVGNLLSVARAFQYFDASVNLVSTPEEIMSADRLVLPGVGAFEDGMKGLTTLNFIEPIKQFARSGKPFLGICLGMQMMLSRSTEFGQHEGLDLIAGEVVSVPSHGVDGQLHKIPHIGWNELVSTSEGEDWCHTILKNIPLNSSVYFVHSFMAMPSNPKKRLADTLYDGQAISAVIKDENMYGCQFHPEKSGEVGLSIIQQFLQI.

Residues 3–213 (SVSIVDYGVG…LSIIQQFLQI (211 aa)) form the Glutamine amidotransferase type-1 domain. Cysteine 81 serves as the catalytic Nucleophile. Residues histidine 195 and glutamate 197 contribute to the active site.

As to quaternary structure, heterodimer of HisH and HisF.

It is found in the cytoplasm. The catalysed reaction is 5-[(5-phospho-1-deoxy-D-ribulos-1-ylimino)methylamino]-1-(5-phospho-beta-D-ribosyl)imidazole-4-carboxamide + L-glutamine = D-erythro-1-(imidazol-4-yl)glycerol 3-phosphate + 5-amino-1-(5-phospho-beta-D-ribosyl)imidazole-4-carboxamide + L-glutamate + H(+). The enzyme catalyses L-glutamine + H2O = L-glutamate + NH4(+). It functions in the pathway amino-acid biosynthesis; L-histidine biosynthesis; L-histidine from 5-phospho-alpha-D-ribose 1-diphosphate: step 5/9. Functionally, IGPS catalyzes the conversion of PRFAR and glutamine to IGP, AICAR and glutamate. The HisH subunit provides the glutamine amidotransferase activity that produces the ammonia necessary to HisF for the synthesis of IGP and AICAR. In Legionella pneumophila (strain Paris), this protein is Imidazole glycerol phosphate synthase subunit HisH 1.